An 873-amino-acid polypeptide reads, in one-letter code: Leucine--tRNA ligase (873 aa).

Residues 42 to 52 (PYPSGKLHMGH) carry the 'HIGH' region motif. Positions 628 to 632 (KMAKS) match the 'KMSKS' region motif. Lysine 631 provides a ligand contact to ATP.

This sequence belongs to the class-I aminoacyl-tRNA synthetase family.

It localises to the cytoplasm. It catalyses the reaction tRNA(Leu) + L-leucine + ATP = L-leucyl-tRNA(Leu) + AMP + diphosphate. The sequence is that of Leucine--tRNA ligase from Aromatoleum aromaticum (strain DSM 19018 / LMG 30748 / EbN1) (Azoarcus sp. (strain EbN1)).